The chain runs to 478 residues: Protein nucleotidyltransferase YdiU (478 aa).

Positions 84, 86, 87, 107, 119, 120, 170, and 177 each coordinate ATP. D246 (proton acceptor) is an active-site residue. Mg(2+) is bound by residues N247 and D256. Residue D256 participates in ATP binding.

The protein belongs to the SELO family. Requires Mg(2+) as cofactor. The cofactor is Mn(2+).

The catalysed reaction is L-seryl-[protein] + ATP = 3-O-(5'-adenylyl)-L-seryl-[protein] + diphosphate. It catalyses the reaction L-threonyl-[protein] + ATP = 3-O-(5'-adenylyl)-L-threonyl-[protein] + diphosphate. It carries out the reaction L-tyrosyl-[protein] + ATP = O-(5'-adenylyl)-L-tyrosyl-[protein] + diphosphate. The enzyme catalyses L-histidyl-[protein] + UTP = N(tele)-(5'-uridylyl)-L-histidyl-[protein] + diphosphate. The catalysed reaction is L-seryl-[protein] + UTP = O-(5'-uridylyl)-L-seryl-[protein] + diphosphate. It catalyses the reaction L-tyrosyl-[protein] + UTP = O-(5'-uridylyl)-L-tyrosyl-[protein] + diphosphate. Nucleotidyltransferase involved in the post-translational modification of proteins. It can catalyze the addition of adenosine monophosphate (AMP) or uridine monophosphate (UMP) to a protein, resulting in modifications known as AMPylation and UMPylation. The protein is Protein nucleotidyltransferase YdiU of Escherichia coli (strain ATCC 8739 / DSM 1576 / NBRC 3972 / NCIMB 8545 / WDCM 00012 / Crooks).